The primary structure comprises 99 residues: MFAIIQSGGKQYRVQEGDVVRVETLKGEAGDKLELKPILVGGNDTLLGDEAARFTVNAEIVEHGLGKKIYIRKYKSGIQYRRRNGHRQPYTAIRITSIA.

Belongs to the bacterial ribosomal protein bL21 family. As to quaternary structure, part of the 50S ribosomal subunit. Contacts protein L20.

In terms of biological role, this protein binds to 23S rRNA in the presence of protein L20. The protein is Large ribosomal subunit protein bL21 of Deinococcus geothermalis (strain DSM 11300 / CIP 105573 / AG-3a).